A 297-amino-acid polypeptide reads, in one-letter code: uncharacterized protein (297 aa).

WD repeat units lie at residues 12 to 51, 54 to 93, 96 to 135, 140 to 177, 179 to 217, 222 to 261, and 265 to 297; these read KAKE…CIHE, GHGH…VDRR, GHLA…FSPI, DAKD…LSSD, FSHP…ILKS, KNME…QITS, and VGTP…YQYN.

Belongs to the WD repeat MORG1 family.

The protein localises to the cytoplasm. The protein resides in the nucleus. This is an uncharacterized protein from Schizosaccharomyces pombe (strain 972 / ATCC 24843) (Fission yeast).